Consider the following 355-residue polypeptide: Phosphoribosylformylglycinamidine cyclo-ligase (355 aa).

It belongs to the AIR synthase family.

It is found in the cytoplasm. The enzyme catalyses 2-formamido-N(1)-(5-O-phospho-beta-D-ribosyl)acetamidine + ATP = 5-amino-1-(5-phospho-beta-D-ribosyl)imidazole + ADP + phosphate + H(+). Its pathway is purine metabolism; IMP biosynthesis via de novo pathway; 5-amino-1-(5-phospho-D-ribosyl)imidazole from N(2)-formyl-N(1)-(5-phospho-D-ribosyl)glycinamide: step 2/2. The chain is Phosphoribosylformylglycinamidine cyclo-ligase from Paraburkholderia xenovorans (strain LB400).